The chain runs to 179 residues: Putative endogenous retrovirus group FC1 Env polyprotein (179 aa).

The N-terminal stretch at 1-22 (MARPSPLCLLLLLTLLPPIVPS) is a signal peptide. The truncated surface protein stretch occupies residues 23–179 (NSLLTEPPFR…SKLRIFRTYV (157 aa)). A glycan (N-linked (GlcNAc...) asparagine) is linked at Asn69.

Belongs to the gamma type-C retroviral envelope protein family. HERV class-I F(c)1 env subfamily.

The protein localises to the virion. In terms of biological role, retroviral envelope proteins mediate receptor recognition and membrane fusion during early infection. Endogenous envelope proteins may have kept, lost or modified their original function during evolution. The protein is Putative endogenous retrovirus group FC1 Env polyprotein (ERVFC1) of Gorilla gorilla gorilla (Western lowland gorilla).